Consider the following 187-residue polypeptide: Elongation factor P (187 aa).

It belongs to the elongation factor P family.

The protein resides in the cytoplasm. Its pathway is protein biosynthesis; polypeptide chain elongation. In terms of biological role, involved in peptide bond synthesis. Stimulates efficient translation and peptide-bond synthesis on native or reconstituted 70S ribosomes in vitro. Probably functions indirectly by altering the affinity of the ribosome for aminoacyl-tRNA, thus increasing their reactivity as acceptors for peptidyl transferase. This chain is Elongation factor P, found in Paenarthrobacter aurescens (strain TC1).